Reading from the N-terminus, the 119-residue chain is UPF0102 protein MS1289 (119 aa).

Belongs to the UPF0102 family.

This chain is UPF0102 protein MS1289, found in Mannheimia succiniciproducens (strain KCTC 0769BP / MBEL55E).